The primary structure comprises 913 residues: ER degradation-enhancing alpha-mannosidase-like protein 3 (913 aa).

An N-terminal signal peptide occupies residues 1–15 (MGCPAVEARRWGDMW). The N-linked (GlcNAc...) asparagine glycan is linked to Asn-104. Catalysis depends on Glu-132, which acts as the Proton donor. Asn-181 carries an N-linked (GlcNAc...) asparagine glycan. Asp-279 is a catalytic residue. Residue Glu-373 is the Proton donor of the active site. Glu-391 is a catalytic residue. Thr-477 is a Ca(2+) binding site. Asn-497 carries N-linked (GlcNAc...) asparagine glycosylation. The PA domain maps to 660–766 (LSKHLAGAQG…KEGNIILDAI (107 aa)). Asn-797 is a glycosylation site (N-linked (GlcNAc...) asparagine). The segment at 823 to 895 (EESPVSQPEV…NKVQPMESIL (73 aa)) is disordered. Low complexity predominate over residues 826-839 (PVSQPEVPSSDSPS). The segment covering 843 to 866 (RTSERDITPESQEHKTEETEHSPK) has biased composition (basic and acidic residues). Residues 910–913 (KDEL) carry the Prevents secretion from ER motif.

The protein belongs to the glycosyl hydrolase 47 family. Requires Ca(2+) as cofactor.

It is found in the endoplasmic reticulum lumen. It carries out the reaction N(4)-(alpha-D-Man-(1-&gt;2)-alpha-D-Man-(1-&gt;2)-alpha-D-Man-(1-&gt;3)-[alpha-D-Man-(1-&gt;2)-alpha-D-Man-(1-&gt;3)-[alpha-D-Man-(1-&gt;2)-alpha-D-Man-(1-&gt;6)]-alpha-D-Man-(1-&gt;6)]-beta-D-Man-(1-&gt;4)-beta-D-GlcNAc-(1-&gt;4)-beta-D-GlcNAc)-L-asparaginyl-[protein] (N-glucan mannose isomer 9A1,2,3B1,2,3) + 4 H2O = N(4)-(alpha-D-Man-(1-&gt;3)-[alpha-D-Man-(1-&gt;3)-[alpha-D-Man-(1-&gt;6)]-alpha-D-Man-(1-&gt;6)]-beta-D-Man-(1-&gt;4)-beta-D-GlcNAc-(1-&gt;4)-beta-D-GlcNAc)-L-asparaginyl-[protein] (N-glucan mannose isomer 5A1,2) + 4 beta-D-mannose. The catalysed reaction is N(4)-(alpha-D-Man-(1-&gt;2)-alpha-D-Man-(1-&gt;2)-alpha-D-Man-(1-&gt;3)-[alpha-D-Man-(1-&gt;3)-[alpha-D-Man-(1-&gt;2)-alpha-D-Man-(1-&gt;6)]-alpha-D-Man-(1-&gt;6)]-beta-D-Man-(1-&gt;4)-beta-D-GlcNAc-(1-&gt;4)-beta-D-GlcNAc)-L-asparaginyl-[protein] (N-glucan mannose isomer 8A1,2,3B1,3) + 3 H2O = N(4)-(alpha-D-Man-(1-&gt;3)-[alpha-D-Man-(1-&gt;3)-[alpha-D-Man-(1-&gt;6)]-alpha-D-Man-(1-&gt;6)]-beta-D-Man-(1-&gt;4)-beta-D-GlcNAc-(1-&gt;4)-beta-D-GlcNAc)-L-asparaginyl-[protein] (N-glucan mannose isomer 5A1,2) + 3 beta-D-mannose. The protein operates within protein modification; protein glycosylation. Its function is as follows. May be involved in endoplasmic reticulum-associated degradation (ERAD). The chain is ER degradation-enhancing alpha-mannosidase-like protein 3 (edem3) from Xenopus laevis (African clawed frog).